We begin with the raw amino-acid sequence, 25 residues long: Large ribosomal subunit protein uL30 (25 aa).

It belongs to the universal ribosomal protein uL30 family. Part of the 50S ribosomal subunit.

The protein is Large ribosomal subunit protein uL30 (rpmD) of Pseudomonas putida (Arthrobacter siderocapsulatus).